The following is a 324-amino-acid chain: Acetyl-coenzyme A carboxylase carboxyl transferase subunit alpha (324 aa).

The CoA carboxyltransferase C-terminal domain occupies 37–291 (KLERRLDKLK…QNFILQEWLR (255 aa)).

This sequence belongs to the AccA family. In terms of assembly, acetyl-CoA carboxylase is a heterohexamer composed of biotin carboxyl carrier protein (AccB), biotin carboxylase (AccC) and two subunits each of ACCase subunit alpha (AccA) and ACCase subunit beta (AccD).

It is found in the cytoplasm. It catalyses the reaction N(6)-carboxybiotinyl-L-lysyl-[protein] + acetyl-CoA = N(6)-biotinyl-L-lysyl-[protein] + malonyl-CoA. The protein operates within lipid metabolism; malonyl-CoA biosynthesis; malonyl-CoA from acetyl-CoA: step 1/1. In terms of biological role, component of the acetyl coenzyme A carboxylase (ACC) complex. First, biotin carboxylase catalyzes the carboxylation of biotin on its carrier protein (BCCP) and then the CO(2) group is transferred by the carboxyltransferase to acetyl-CoA to form malonyl-CoA. This is Acetyl-coenzyme A carboxylase carboxyl transferase subunit alpha from Chlamydia caviae (strain ATCC VR-813 / DSM 19441 / 03DC25 / GPIC) (Chlamydophila caviae).